The sequence spans 465 residues: Innexin-11 (465 aa).

A run of 4 helical transmembrane segments spans residues 29–49 (LMTPNILLAFSVLISFKQFGG), 105–125 (QWVPFFLLLQAAFFRAPSYLW), 195–215 (SGFISWIYLFTKVLYFLNVFA), and 286–306 (IFVLLWFWYVILLLSSTVSLV). The tract at residues 433–465 (ISTSLMPDKDDIESSSTSSEEDQKRVSNVITNI) is disordered.

It belongs to the pannexin family.

The protein resides in the cell membrane. Its subcellular location is the cell junction. It is found in the gap junction. Functionally, structural component of the gap junctions. This chain is Innexin-11 (inx-11), found in Caenorhabditis elegans.